The chain runs to 63 residues: Large ribosomal subunit protein bL32 (63 aa).

Basic residues predominate over residues 1-18 (MAHPKRRISRSRRDKRRA). Positions 1–27 (MAHPKRRISRSRRDKRRAQYNAKTKAP) are disordered.

It belongs to the bacterial ribosomal protein bL32 family.

The chain is Large ribosomal subunit protein bL32 from Chloroherpeton thalassium (strain ATCC 35110 / GB-78).